The primary structure comprises 273 residues: Type III pantothenate kinase (273 aa).

An ATP-binding site is contributed by 7–14; it reads DVGNTAIK. Residues phenylalanine 119 and 124-127 contribute to the substrate site; that span reads GIDR. The active-site Proton acceptor is aspartate 126. Aspartate 146 contacts K(+). Threonine 149 lines the ATP pocket. Threonine 206 contributes to the substrate binding site.

Belongs to the type III pantothenate kinase family. As to quaternary structure, homodimer. NH4(+) is required as a cofactor. K(+) serves as cofactor.

The protein resides in the cytoplasm. The enzyme catalyses (R)-pantothenate + ATP = (R)-4'-phosphopantothenate + ADP + H(+). It functions in the pathway cofactor biosynthesis; coenzyme A biosynthesis; CoA from (R)-pantothenate: step 1/5. In terms of biological role, catalyzes the phosphorylation of pantothenate (Pan), the first step in CoA biosynthesis. This Rhodopirellula baltica (strain DSM 10527 / NCIMB 13988 / SH1) protein is Type III pantothenate kinase.